The chain runs to 414 residues: Translation initiation factor 2 subunit gamma (414 aa).

The tr-type G domain occupies 8-206; that stretch reads QPEVNIGVVG…AIEKFIPTPP (199 aa). The tract at residues 17 to 24 is G1; that stretch reads GHVDHGKT. The Mg(2+) site is built by aspartate 20, threonine 24, glycine 45, and threonine 47. GTP is bound at residue 20–25; it reads DHGKTT. The interval 45–49 is G2; sequence GMTIK. Residues cysteine 60, cysteine 63, cysteine 75, and cysteine 77 each coordinate Zn(2+). The interval 93–96 is G3; the sequence is DAPG. Residues 149–152 and 184–186 contribute to the GTP site; these read NKVD and SAL. Residues 149–152 are G4; that stretch reads NKVD. The interval 184-186 is G5; sequence SAL.

It belongs to the TRAFAC class translation factor GTPase superfamily. Classic translation factor GTPase family. EIF2G subfamily. As to quaternary structure, heterotrimer composed of an alpha, a beta and a gamma chain. The cofactor is Mg(2+).

It catalyses the reaction GTP + H2O = GDP + phosphate + H(+). Functionally, eIF-2 functions in the early steps of protein synthesis by forming a ternary complex with GTP and initiator tRNA. This Aeropyrum pernix (strain ATCC 700893 / DSM 11879 / JCM 9820 / NBRC 100138 / K1) protein is Translation initiation factor 2 subunit gamma.